The following is a 414-amino-acid chain: Putative nickel insertion protein (414 aa).

The segment at 70 to 91 (ATHHDHDHSQDQTHHHHADHAP) is disordered.

It belongs to the LarC family.

The protein is Putative nickel insertion protein of Picosynechococcus sp. (strain ATCC 27264 / PCC 7002 / PR-6) (Agmenellum quadruplicatum).